A 366-amino-acid chain; its full sequence is Ribosomal RNA large subunit methyltransferase M (366 aa).

Residues S188, 221 to 224 (CPGG), D240, D260, and D277 each bind S-adenosyl-L-methionine. Residue K306 is the Proton acceptor of the active site.

Belongs to the class I-like SAM-binding methyltransferase superfamily. RNA methyltransferase RlmE family. RlmM subfamily. Monomer.

The protein resides in the cytoplasm. The enzyme catalyses cytidine(2498) in 23S rRNA + S-adenosyl-L-methionine = 2'-O-methylcytidine(2498) in 23S rRNA + S-adenosyl-L-homocysteine + H(+). Catalyzes the 2'-O-methylation at nucleotide C2498 in 23S rRNA. This Escherichia fergusonii (strain ATCC 35469 / DSM 13698 / CCUG 18766 / IAM 14443 / JCM 21226 / LMG 7866 / NBRC 102419 / NCTC 12128 / CDC 0568-73) protein is Ribosomal RNA large subunit methyltransferase M.